We begin with the raw amino-acid sequence, 236 residues long: Thymidylate kinase (236 aa).

9–16 (GPEGSGKS) contacts ATP.

The protein belongs to the thymidylate kinase family.

The enzyme catalyses dTMP + ATP = dTDP + ADP. Its function is as follows. Phosphorylation of dTMP to form dTDP in both de novo and salvage pathways of dTTP synthesis. This Herpetosiphon aurantiacus (strain ATCC 23779 / DSM 785 / 114-95) protein is Thymidylate kinase.